A 370-amino-acid chain; its full sequence is Histidinol-phosphate aminotransferase (370 aa).

Lys-230 is modified (N6-(pyridoxal phosphate)lysine).

Belongs to the class-II pyridoxal-phosphate-dependent aminotransferase family. Histidinol-phosphate aminotransferase subfamily. In terms of assembly, homodimer. Pyridoxal 5'-phosphate is required as a cofactor.

It catalyses the reaction L-histidinol phosphate + 2-oxoglutarate = 3-(imidazol-4-yl)-2-oxopropyl phosphate + L-glutamate. The protein operates within amino-acid biosynthesis; L-histidine biosynthesis; L-histidine from 5-phospho-alpha-D-ribose 1-diphosphate: step 7/9. The polypeptide is Histidinol-phosphate aminotransferase (Leptospira interrogans serogroup Icterohaemorrhagiae serovar Lai (strain 56601)).